The chain runs to 459 residues: MHNIHRRHFLKAAGAVTAGLITANITASTHANSVAPKPQTGKSVIGLIAPKMDVVRVGFIGVGERGFSHVEQFCHLEGVELKAICDTHQAVIDRAVAHIAKQNRPQPTVYTGDDLSYRDLLSRDDIDIVIISTPWEWHAPMAIETMESGKHAFVEVPLALTVEECWQIVDTAERTQKNCMMMENVNYGREELMVLNMVRQGVFGELLHGEAAYIHELRWQMKEIDHKTGSWRTYWHTKRNGNLYPTHGLGPVSQYMNINRGDRFDYLTSMSSPALGRALYAKREFPADHERNQLKYINGDINTSLIKTVKGRTIMVQHDTTTPRPYSRHNLIQGTNGVFAGFPNRIAVEHGGFGKSYHEWDMDMQKWYDKYDHPLWQRIGKEAEINGGHGGMDFVMLWRMIYCLRNGEALDQDVYDAASWSVVNILSEQSVNNRSNSVTFPDFTRGAWEHAKPLGIVGA.

The tat-type signal signal peptide spans 1–31 (MHNIHRRHFLKAAGAVTAGLITANITASTHA). Residues 64–65 (ER), Asp86, 135–138 (WEWH), 155–156 (EV), and Asn184 each bind NAD(+). Residues Tyr213, Arg232, 244–247 (YPTH), and Tyr326 contribute to the substrate site. Residue Tyr244 coordinates NAD(+).

This sequence belongs to the Gfo/Idh/MocA family. Glycosyl hydrolase 109 subfamily. NAD(+) is required as a cofactor. Predicted to be exported by the Tat system. The position of the signal peptide cleavage has not been experimentally proven.

Functionally, glycosidase. In Shewanella sp. (strain W3-18-1), this protein is Glycosyl hydrolase family 109 protein.